The chain runs to 635 residues: ADP-ribosylation factor-binding protein GGA1 (635 aa).

Position 1 is an N-acetylmethionine (methionine 1). Residues alanine 17–serine 147 form the VHS domain. Residues lysine 114 to aspartate 273 form an interaction with ARF3 region. A GAT domain is found at aspartate 171–arginine 298. The residue at position 185 (serine 185) is a Phosphoserine. Positions glycine 299–proline 505 are unstructured hinge. Residues aspartate 305–leucine 349 form a disordered region. Over residues glycine 313–aspartate 325 the composition is skewed to low complexity. Serine 354 is modified (phosphoserine). An Autoinhibitory motif is present at residues aspartate 357–methionine 361. 2 disordered regions span residues serine 362–leucine 422 and arginine 455–glutamate 490. Positions asparagine 383–serine 393 are enriched in polar residues. Serine 417 bears the Phosphoserine mark. Residues serine 459–serine 476 show a composition bias toward low complexity. Over residues proline 477–alanine 486 the composition is skewed to pro residues. In terms of domain architecture, GAE spans serine 506–proline 627.

This sequence belongs to the GGA protein family. As to quaternary structure, monomer. Interacts with GGA2 and GGA3. Binds to clathrin and activated ARFs, including ARF1, ARF5 and ARF6. Interacts with RABEP1 and RABGEF1. Interacts with the type-I membrane proteins LRP3, M6PR/CD-MPR and IGF2R/CI-MPR. Interacts (via N-terminal VHS domain) with SORL1/sorLA and SORT1 (via C-terminal cytosolic domain). Interacts with EPN4. Interacts with CCDC91. Interacts with HEATR5B/p200a. Interacts with SYNRG/gamma-synergin. Interacts (via GAE doamin) with NECAP1 and NECAP2. Interacts (via GAE domain) with AFTPH/aftiphilin. Interacts with TSG101 and UBC. Interacts with RNF11. Interacts (via VHS domain) with BACE1 (via DXXLL motif); the interaction highly increases when BACE1 is phosphorylated at 'Ser-498'. Interacts with CNST. Interacts with ADRA2B. Interacts with ARL3; the interaction recruits, in collaboration with RABEP1, PKD1:PKD2 complex to trans-Golgi network and is required for ciliary targeting. Post-translationally, phosphorylated by CK2 and dephosphorylated by PP2A. Phosphorylation of GGA1 allows the internal DXXLL motif to bind the VHS domain and to inhibit the recognition of cargo signals. Ubiquitinated.

It is found in the golgi apparatus. Its subcellular location is the trans-Golgi network membrane. The protein resides in the endosome membrane. The protein localises to the early endosome membrane. Plays a role in protein sorting and trafficking between the trans-Golgi network (TGN) and endosomes. Mediates the ARF-dependent recruitment of clathrin to the TGN and binds ubiquitinated proteins and membrane cargo molecules with a cytosolic acidic cluster-dileucine (DXXLL) motif. Mediates export of the GPCR receptor ADRA2B to the cell surface. Required for targeting PKD1:PKD2 complex from the trans-Golgi network to the cilium membrane. Regulates retrograde transport of proteins such as phosphorylated form of BACE1 from endosomes to the trans-Golgi network. This Mus musculus (Mouse) protein is ADP-ribosylation factor-binding protein GGA1 (Gga1).